A 65-amino-acid polypeptide reads, in one-letter code: Large ribosomal subunit protein bL35 (65 aa).

The protein belongs to the bacterial ribosomal protein bL35 family.

This Thermotoga neapolitana (strain ATCC 49049 / DSM 4359 / NBRC 107923 / NS-E) protein is Large ribosomal subunit protein bL35.